We begin with the raw amino-acid sequence, 624 residues long: Cilia- and flagella-associated protein 206 (624 aa).

The protein belongs to the CFAP206 family.

The protein localises to the cytoplasm. Its subcellular location is the cytoskeleton. It is found in the cilium axoneme. The protein resides in the cilium basal body. Functionally, essential for sperm motility and is involved in the regulation of the beating frequency of motile cilia on the epithelial cells of the respiratory tract. Required for the establishment of radial spokes in sperm flagella. The polypeptide is Cilia- and flagella-associated protein 206 (cfap206) (Danio rerio (Zebrafish)).